A 282-amino-acid polypeptide reads, in one-letter code: Pantothenate synthetase (282 aa).

Residue 30–37 (MGNLHEGH) participates in ATP binding. The Proton donor role is filled by His-37. Gln-61 contributes to the (R)-pantoate binding site. Gln-61 is a beta-alanine binding site. 148-151 (GQKD) provides a ligand contact to ATP. Residue Gln-154 coordinates (R)-pantoate. ATP contacts are provided by residues Val-177 and 185–188 (LSSR).

It belongs to the pantothenate synthetase family. In terms of assembly, homodimer.

The protein localises to the cytoplasm. The enzyme catalyses (R)-pantoate + beta-alanine + ATP = (R)-pantothenate + AMP + diphosphate + H(+). It participates in cofactor biosynthesis; (R)-pantothenate biosynthesis; (R)-pantothenate from (R)-pantoate and beta-alanine: step 1/1. Its function is as follows. Catalyzes the condensation of pantoate with beta-alanine in an ATP-dependent reaction via a pantoyl-adenylate intermediate. This Acinetobacter baumannii (strain AB0057) protein is Pantothenate synthetase.